The following is a 214-amino-acid chain: MQLDKGLFVAFEGPDACGKSTVSKLVYQKLINFFNNKDSVILTREPGGTEVGEKIREILVNYDIDPRTEALLFAASRTEHVWNVILKAKANKKIILCDRFIHSSLVYQGIVKNLGYKNVYKVNQFGISKIKPDIVFYFSANPKVLLERKTKDKDRDIFDRLDNQYAQEENLKKIIGGYSSILQFDNRNVIRLDALKPVEELANKICATILERVR.

13 to 20 (GPDACGKS) provides a ligand contact to ATP.

This sequence belongs to the thymidylate kinase family.

The enzyme catalyses dTMP + ATP = dTDP + ADP. Phosphorylation of dTMP to form dTDP in both de novo and salvage pathways of dTTP synthesis. In Malacoplasma penetrans (strain HF-2) (Mycoplasma penetrans), this protein is Thymidylate kinase.